The chain runs to 185 residues: ATP synthase subunit b, cyanelle (185 aa).

A helical membrane pass occupies residues 36-58; sequence LINLLVIFFLLIYQGRPFFTALL.

This sequence belongs to the ATPase B chain family. F-type ATPases have 2 components, F(1) - the catalytic core - and F(0) - the membrane proton channel. F(1) has five subunits: alpha(3), beta(3), gamma(1), delta(1), epsilon(1). F(0) has four main subunits: a(1), b(1), b'(1) and c(10-14). The alpha and beta chains form an alternating ring which encloses part of the gamma chain. F(1) is attached to F(0) by a central stalk formed by the gamma and epsilon chains, while a peripheral stalk is formed by the delta, b and b' chains.

The protein resides in the plastid. It is found in the cyanelle thylakoid membrane. In terms of biological role, f(1)F(0) ATP synthase produces ATP from ADP in the presence of a proton or sodium gradient. F-type ATPases consist of two structural domains, F(1) containing the extramembraneous catalytic core and F(0) containing the membrane proton channel, linked together by a central stalk and a peripheral stalk. During catalysis, ATP synthesis in the catalytic domain of F(1) is coupled via a rotary mechanism of the central stalk subunits to proton translocation. Functionally, component of the F(0) channel, it forms part of the peripheral stalk, linking F(1) to F(0). This Cyanophora paradoxa protein is ATP synthase subunit b, cyanelle.